We begin with the raw amino-acid sequence, 150 residues long: Regulatory protein RecX (150 aa).

The protein belongs to the RecX family.

Its subcellular location is the cytoplasm. Its function is as follows. Modulates RecA activity. This is Regulatory protein RecX from Legionella pneumophila (strain Corby).